A 193-amino-acid polypeptide reads, in one-letter code: Glycerol-3-phosphate acyltransferase (193 aa).

4 helical membrane passes run 2-22 (LIAL…GLIV), 76-96 (VPIH…FPVF), 112-132 (LLFY…VFLF), and 152-172 (CLFV…AFVI).

This sequence belongs to the PlsY family. In terms of assembly, probably interacts with PlsX.

The protein localises to the cell membrane. It carries out the reaction an acyl phosphate + sn-glycerol 3-phosphate = a 1-acyl-sn-glycero-3-phosphate + phosphate. It functions in the pathway lipid metabolism; phospholipid metabolism. Functionally, catalyzes the transfer of an acyl group from acyl-phosphate (acyl-PO(4)) to glycerol-3-phosphate (G3P) to form lysophosphatidic acid (LPA). This enzyme utilizes acyl-phosphate as fatty acyl donor, but not acyl-CoA or acyl-ACP. The polypeptide is Glycerol-3-phosphate acyltransferase (Bacillus velezensis (strain DSM 23117 / BGSC 10A6 / LMG 26770 / FZB42) (Bacillus amyloliquefaciens subsp. plantarum)).